A 599-amino-acid polypeptide reads, in one-letter code: uncharacterized protein (599 aa).

The segment covering 1-13 (MSSSSSHNSFSGS) has biased composition (low complexity). Disordered stretches follow at residues 1–27 (MSSSSSHNSFSGSKTNAAEGQNSIDGL) and 41–86 (YPSN…DDTN). Positions 14–27 (KTNAAEGQNSIDGL) are enriched in polar residues. Residues 44-70 (NEEKEVKETDIVPDENKVNELDVHKQS) show a composition bias toward basic and acidic residues. 14 helical membrane passes run 97–117 (IVVPALILTLFLAALDNTIVT), 135–155 (WIGSAYVLASNAVLPAVGVFC), 162–182 (IVLYICIFFFMLGSALCGASQ), 192–212 (AIQGLGGGGIISLVNIIISDI), 223–243 (GILATAWGAALVAGPIIGGAI), 251–271 (WIFFINLPSGGIATALIVVFL), 290–310 (FIGLVCVITGIVLILLGISLG), 321–341 (ILCYLIIGGCLFVFAFIYDTF), 359–379 (AALLACSSFFYLNYMLFAYYV), 396–416 (VHTIPCAAVLCFFCTTVGMVL), 423–443 (LPLIYVGYISCVAGMGAMICV), 452–472 (VMGLTTIFMFGSGFLFLPPLI), 489–509 (TLMFIRTMGGSIGITVGEVIF), and 552–572 (VIWIFCTVVMAIGFASIFFIK).

Belongs to the major facilitator superfamily. TCR/Tet family.

It is found in the membrane. This is an uncharacterized protein from Schizosaccharomyces pombe (strain 972 / ATCC 24843) (Fission yeast).